A 957-amino-acid polypeptide reads, in one-letter code: Glutamyl aminopeptidase (957 aa).

Over 1–18 the chain is Cytoplasmic; it reads MNFAEREGSKRYCIQTKH. The chain crosses the membrane as a helical; Signal-anchor for type II membrane protein span at residues 19-39; the sequence is VAILCAVVVGVGLIVGLAVGL. At 40-957 the chain is on the extracellular side; sequence TRSCDSSGDG…EWFFNLLESG (918 aa). The disordered stretch occupies residues 44-83; it reads DSSGDGGPGTAPAPSHLPSSTASPSGPPAQDQDICPASED. Asparagine 98 carries N-linked (GlcNAc...) asparagine; atypical glycosylation. N-linked (GlcNAc...) asparagine glycans are attached at residues asparagine 124 and asparagine 197. Glutamate 223 is a substrate binding site. N-linked (GlcNAc...) asparagine glycosylation is found at asparagine 324 and asparagine 340. A substrate-binding site is contributed by 357-361; that stretch reads GAMEN. Histidine 393 contributes to the Zn(2+) binding site. Glutamate 394 (proton acceptor) is an active-site residue. The Zn(2+) site is built by histidine 397 and glutamate 416. N-linked (GlcNAc...) asparagine glycans are attached at residues asparagine 554, asparagine 589, asparagine 597, asparagine 607, asparagine 678, asparagine 763, asparagine 773, asparagine 801, and asparagine 828. Residue arginine 887 participates in substrate binding.

Belongs to the peptidase M1 family. In terms of assembly, homodimer; disulfide-linked. It depends on Zn(2+) as a cofactor. As to expression, expressed in choriocarcinoma cancer cell lines (at protein level). Expressed by epithelial cells of the proximal tubule cells and the glomerulus of the nephron. Also found in a variety of other tissues.

The protein resides in the cell membrane. It carries out the reaction Release of N-terminal glutamate (and to a lesser extent aspartate) from a peptide.. With respect to regulation, substrate specificity is modulated by calcium which enhances the enzymatic activity for cleavage of acidic residues while reducing its activity with basic residues. Inhibited by aminopeptidase inhibitors amastatin and bestatin. Its function is as follows. Regulates central hypertension through its calcium-modulated preference to cleave N-terminal acidic residues from peptides such as angiotensin II. This chain is Glutamyl aminopeptidase (ENPEP), found in Homo sapiens (Human).